The chain runs to 666 residues: UvrABC system protein B (666 aa).

A Helicase ATP-binding domain is found at Asp26–Arg183. Gly39 to Thr46 serves as a coordination point for ATP. The short motif at Tyr92–Ile115 is the Beta-hairpin element. One can recognise a Helicase C-terminal domain in the interval Gln429–Val591. Residues Glu625–Asn660 form the UVR domain.

It belongs to the UvrB family. Forms a heterotetramer with UvrA during the search for lesions. Interacts with UvrC in an incision complex.

The protein localises to the cytoplasm. The UvrABC repair system catalyzes the recognition and processing of DNA lesions. A damage recognition complex composed of 2 UvrA and 2 UvrB subunits scans DNA for abnormalities. Upon binding of the UvrA(2)B(2) complex to a putative damaged site, the DNA wraps around one UvrB monomer. DNA wrap is dependent on ATP binding by UvrB and probably causes local melting of the DNA helix, facilitating insertion of UvrB beta-hairpin between the DNA strands. Then UvrB probes one DNA strand for the presence of a lesion. If a lesion is found the UvrA subunits dissociate and the UvrB-DNA preincision complex is formed. This complex is subsequently bound by UvrC and the second UvrB is released. If no lesion is found, the DNA wraps around the other UvrB subunit that will check the other stand for damage. The protein is UvrABC system protein B of Leptospira borgpetersenii serovar Hardjo-bovis (strain JB197).